Consider the following 84-residue polypeptide: M-zodatoxin-Lt2a (84 aa).

Residues 1 to 22 (MKYFVIALALAVALVCIAESTA) form the signal peptide. Positions 23 to 58 (YEVNEELENELDDLDDAAWLAVAEELQGLEDFEESR) are excised as a propeptide. Positions 55–58 (EESR) match the Processing quadruplet motif motif.

In terms of processing, cleavage of the propeptide depends on the processing quadruplet motif (XXXR, with at least one of X being E). As to expression, expressed by the venom gland.

It localises to the secreted. Its function is as follows. It has antimicrobial activity against Gram-positive bacteria (A.globiformis VKM Ac-1112 (MIC=0.7 uM), and B.subtilis VKM B-501 (MIC=0.4 uM)), Gram-negative bacteria (E.coli DH5-alpha (MIC=1.0 uM), E.coli MH1 (MIC=0.7 uM), and P.aeruginosa PAO1 (MIC=6.7 uM)), and yeasts (P.pastoris GS115 (MIC=6.7 uM), and S.cerevisiae Y190 (MIC=54 uM)). Also has a strong hemolytic activity against rabbit erythrocytes. Causes paralysis, but is not lethal when injected into insect (M.domestica) larvae. The protein is M-zodatoxin-Lt2a of Lachesana tarabaevi (Spider).